The sequence spans 452 residues: Protein CLT3, chloroplastic (452 aa).

The N-terminal 34 residues, 1–34 (MATTSRRFTTGLFASITSVKSHSANRPQSISLIR), are a transit peptide targeting the chloroplast. Helical transmembrane passes span 105–125 (AEIVIWAAVTAAFGVGNRVMY), 137–157 (FFLAQLSTFGYVAVYYTILYF), 175–195 (PFLIVGILEALAAAAGMAAAA), 202–222 (TTVLSQTFLVWQIFFSIIFLG), 230–250 (ILGCTLVALGVIVSVASGSGA), 258–278 (GVLWILLMVLSFLLQGAGTVL), 307–327 (FQAICIALLLPFLSKLWGIPF), 353–373 (GAPFLPLLFVIMNIGYNIALL), 389–409 (TVSVPIAVFLFTMPLPYLGVA), and 412–432 (LPKGFMGGTIILVLGMILYSW).

It belongs to the CRT-like transporter family.

The protein localises to the plastid. It localises to the chloroplast membrane. Involved in thiol transport from the plastid to the cytosol. Transports probably both glutathione (GSH) and its precursor, gamma-glutamylcysteine (gamma-EC). Exhibits some functional redundancy with CLT1 in maintaining the root GSH pool. The chain is Protein CLT3, chloroplastic from Arabidopsis thaliana (Mouse-ear cress).